A 364-amino-acid polypeptide reads, in one-letter code: Developmentally-regulated GTP-binding protein 2 homolog (364 aa).

The region spanning 63 to 288 (ARVALIGFPS…LLDKIWDYLN (226 aa)) is the OBG-type G domain. GTP contacts are provided by residues 69–76 (GFPSVGKS), 115–119 (DTPGI), and 246–249 (NKMD). The TGS domain occupies 288–363 (NLVRVYTKLR…EDEDVIQIVK (76 aa)).

It belongs to the TRAFAC class OBG-HflX-like GTPase superfamily. OBG GTPase family.

This Dictyostelium discoideum (Social amoeba) protein is Developmentally-regulated GTP-binding protein 2 homolog (drg2).